The chain runs to 309 residues: Aspartate carbamoyltransferase catalytic subunit (309 aa).

Residues Arg-55 and Thr-56 each coordinate carbamoyl phosphate. Lys-85 is an L-aspartate binding site. The carbamoyl phosphate site is built by Arg-106, His-135, and Gln-138. L-aspartate-binding residues include Arg-168 and Arg-230. Carbamoyl phosphate-binding residues include Leu-268 and Pro-269.

Belongs to the aspartate/ornithine carbamoyltransferase superfamily. ATCase family. Heterododecamer (2C3:3R2) of six catalytic PyrB chains organized as two trimers (C3), and six regulatory PyrI chains organized as three dimers (R2).

The catalysed reaction is carbamoyl phosphate + L-aspartate = N-carbamoyl-L-aspartate + phosphate + H(+). It functions in the pathway pyrimidine metabolism; UMP biosynthesis via de novo pathway; (S)-dihydroorotate from bicarbonate: step 2/3. Functionally, catalyzes the condensation of carbamoyl phosphate and aspartate to form carbamoyl aspartate and inorganic phosphate, the committed step in the de novo pyrimidine nucleotide biosynthesis pathway. The sequence is that of Aspartate carbamoyltransferase catalytic subunit from Vibrio vulnificus (strain YJ016).